Reading from the N-terminus, the 65-residue chain is Large ribosomal subunit protein bL35 (65 aa).

Belongs to the bacterial ribosomal protein bL35 family.

This chain is Large ribosomal subunit protein bL35, found in Clostridium acetobutylicum (strain ATCC 824 / DSM 792 / JCM 1419 / IAM 19013 / LMG 5710 / NBRC 13948 / NRRL B-527 / VKM B-1787 / 2291 / W).